A 381-amino-acid polypeptide reads, in one-letter code: Heterogeneous nuclear rnp K-like protein 2 (381 aa).

A disordered region spans residues 1–34 (MSQFFEAATPVAIPTNNTNGGSSDAGSAATGGAP). The segment covering 15-33 (TNNTNGGSSDAGSAATGGA) has biased composition (low complexity). KH domains are found at residues 43–107 (TINH…IGDI), 156–221 (IGYV…LIEI), and 258–326 (NTRI…ESML). The tract at residues 357 to 381 (RSDSASFLEEKEEPQKNHDNKEEQS) is disordered. S358, S360, and S362 each carry phosphoserine. The span at 369-381 (EPQKNHDNKEEQS) shows a compositional bias: basic and acidic residues.

The protein belongs to the HEK2 family. Binds RNA. In terms of processing, phosphorylated by the plasma membrane-Anchored casein kinase YCK1. Phosphorylation at its C-terminus reduces its RNA-binding capacity.

It is found in the cytoplasm. Its subcellular location is the P-body. The protein localises to the nucleus. The protein resides in the chromosome. It localises to the telomere. RNA-binding protein involved in the correct localization of transcripts in the cell. RNA localization is a widespread mechanism for achieving localized protein synthesis. Required for the asymmetric localization to the daughter cell nucleus of the ASH1 transcript, coding for a specific repressor of transcription. Overexpression inhibits translation of the ASH1 transcript. Involved in the stability of transcripts, like the MTL1 mRNA. Involved in structural and functional organization of telomeric chromatin and regulates silencing at the HMR locus. In Saccharomyces cerevisiae (strain RM11-1a) (Baker's yeast), this protein is Heterogeneous nuclear rnp K-like protein 2 (HEK2).